The primary structure comprises 415 residues: Tyrosine--tRNA ligase (415 aa).

The 'HIGH' region motif lies at proline 54–histidine 63. The 'KMSKS' region signature appears at lysine 248–threonine 252. Residue lysine 251 participates in ATP binding. Residues alanine 351–alanine 415 enclose the S4 RNA-binding domain.

Belongs to the class-I aminoacyl-tRNA synthetase family. TyrS type 2 subfamily. In terms of assembly, homodimer.

The protein resides in the cytoplasm. It carries out the reaction tRNA(Tyr) + L-tyrosine + ATP = L-tyrosyl-tRNA(Tyr) + AMP + diphosphate + H(+). Its function is as follows. Catalyzes the attachment of tyrosine to tRNA(Tyr) in a two-step reaction: tyrosine is first activated by ATP to form Tyr-AMP and then transferred to the acceptor end of tRNA(Tyr). The protein is Tyrosine--tRNA ligase of Synechococcus sp. (strain CC9902).